The chain runs to 261 residues: tRNA(His) guanylyltransferase (261 aa).

Mg(2+) contacts are provided by Asp-29, Gly-30, and Asp-76. Residues 29 to 34 (DGKGFH) and 75 to 76 (SD) each bind GTP.

Belongs to the tRNA(His) guanylyltransferase family. Requires Mg(2+) as cofactor.

The enzyme catalyses a 5'-end ribonucleotide-tRNA(His) + GTP + ATP + H2O = a 5'-end phospho-guanosine-ribonucleotide-tRNA(His) + AMP + 2 diphosphate + H(+). Functionally, adds a GMP to the 5'-end of tRNA(His) after transcription and RNase P cleavage. This is tRNA(His) guanylyltransferase (thg1) from Schizosaccharomyces pombe (strain 972 / ATCC 24843) (Fission yeast).